A 212-amino-acid chain; its full sequence is Dihydrophenazinedicarboxylate synthase (212 aa).

Ser8 is a binding site for substrate. FMN-binding positions include 63–66 (RVIA) and 78–79 (CT). His80 contacts substrate. FMN contacts are provided by residues 84–85 (RK) and Gln107. Substrate-binding residues include Arg129 and Ser137. FMN contacts are provided by residues 142–143 (QS) and Arg195.

Belongs to the pyridoxamine 5'-phosphate oxidase family. FMN serves as cofactor.

It catalyses the reaction (1R,6R)-1,4,5,5a,6,9-hexahydrophenazine-1,6-dicarboxylate + O2 = (1R,10aS)-1,4,10,10a-tetrahydrophenazine-1,6-dicarboxylate + H2O2. The enzyme catalyses (1R,10aS)-1,4,10,10a-tetrahydrophenazine-1,6-dicarboxylate + O2 = (5aS)-5,5a-dihydrophenazine-1,6-dicarboxylate + H2O2. The catalysed reaction is (1R,10aS)-1,4,10,10a-tetrahydrophenazine-1-carboxylate + O2 = (10aS)-10,10a-dihydrophenazine-1-carboxylate + H2O2. It carries out the reaction (1R)-1,4,5,10-tetrahydrophenazine-1-carboxylate + O2 = (10aS)-10,10a-dihydrophenazine-1-carboxylate + H2O2. The protein operates within antibiotic biosynthesis; phenazine biosynthesis. Its function is as follows. Involved in the biosynthesis of the antibiotic phenazine, a nitrogen-containing heterocyclic molecule having important roles in virulence, competition and biological control. Catalyzes several oxidations in the terminal steps of core phenazine biosynthesis. It oxidizes both hexahydrophenazine-1,6-dicarboxylic acid (HHPDC) and tetrahydrophenazine-1-carboxylic acid (THPCA) and thereby contributes to the generation of both phenazine-1,6-dicarboxylic acid (PDC) and phenazine-1-carboxylic acid (PCA). It synthesizes phenazines in their reduced form, which are the likely end products in vivo. This is Dihydrophenazinedicarboxylate synthase from Burkholderia lata (strain ATCC 17760 / DSM 23089 / LMG 22485 / NCIMB 9086 / R18194 / 383).